The sequence spans 243 residues: Triosephosphate isomerase (243 aa).

9 to 11 is a binding site for substrate; the sequence is NWK. The active-site Electrophile is histidine 96. Glutamate 165 acts as the Proton acceptor in catalysis. Residues glycine 171, serine 204, and 225–226 contribute to the substrate site; that span reads GG.

The protein belongs to the triosephosphate isomerase family. Homodimer.

It localises to the cytoplasm. The catalysed reaction is D-glyceraldehyde 3-phosphate = dihydroxyacetone phosphate. It functions in the pathway carbohydrate biosynthesis; gluconeogenesis. It participates in carbohydrate degradation; glycolysis; D-glyceraldehyde 3-phosphate from glycerone phosphate: step 1/1. Functionally, involved in the gluconeogenesis. Catalyzes stereospecifically the conversion of dihydroxyacetone phosphate (DHAP) to D-glyceraldehyde-3-phosphate (G3P). This chain is Triosephosphate isomerase, found in Prochlorococcus marinus (strain MIT 9211).